We begin with the raw amino-acid sequence, 710 residues long: Integrator complex subunit 10 (710 aa).

The tract at residues 366 to 393 (IHKKRKLAEGREKTMSSDDEDPSGKARS) is disordered. A compositionally biased stretch (basic and acidic residues) spans 372–381 (LAEGREKTMS).

This sequence belongs to the Integrator subunit 10 family. Component of the Integrator complex, composed of core subunits INTS1, INTS2, INTS3, INTS4, INTS5, INTS6, INTS7, INTS8, INTS9/RC74, INTS10, INTS11/CPSF3L, INTS12, INTS13, INTS14 and INTS15. The core complex associates with protein phosphatase 2A subunits PPP2CA and PPP2R1A, to form the Integrator-PP2A (INTAC) complex. INTS10 is part of the tail subcomplex, composed of INTS10, INTS13, INTS14 and INTS15.

It localises to the nucleus. Component of the integrator complex, a multiprotein complex that terminates RNA polymerase II (Pol II) transcription in the promoter-proximal region of genes. The integrator complex provides a quality checkpoint during transcription elongation by driving premature transcription termination of transcripts that are unfavorably configured for transcriptional elongation: the complex terminates transcription by (1) catalyzing dephosphorylation of the C-terminal domain (CTD) of Pol II subunit POLR2A/RPB1 and SUPT5H/SPT5, (2) degrading the exiting nascent RNA transcript via endonuclease activity and (3) promoting the release of Pol II from bound DNA. The integrator complex is also involved in terminating the synthesis of non-coding Pol II transcripts, such as enhancer RNAs (eRNAs), small nuclear RNAs (snRNAs), telomerase RNAs and long non-coding RNAs (lncRNAs). The chain is Integrator complex subunit 10 (INTS10) from Gallus gallus (Chicken).